The sequence spans 194 residues: Early E3 22.1 kDa glycoprotein (194 aa).

N-linked (GlcNAc...) asparagine; by host glycosylation is found at Asn19, Asn60, Asn75, Asn87, Asn125, and Asn138.

In Canine adenovirus serotype 1 (strain RI261) (CAdV-1), this protein is Early E3 22.1 kDa glycoprotein.